The sequence spans 1227 residues: Pesticidal crystal protein Cry1Be (1227 aa).

The protein belongs to the delta endotoxin family.

Its function is as follows. Promotes colloidosmotic lysis by binding to the midgut epithelial cells of many lepidopteran larvae. The polypeptide is Pesticidal crystal protein Cry1Be (cry1Be) (Bacillus thuringiensis).